Reading from the N-terminus, the 132-residue chain is Neurophysin 2 (132 aa).

7 disulfides stabilise this stretch: C10/C54, C13/C27, C21/C44, C28/C34, C61/C73, C67/C85, and C74/C79.

Belongs to the vasopressin/oxytocin family.

Its subcellular location is the secreted. In terms of biological role, neurophysin 2 specifically binds vasopressin. This chain is Neurophysin 2, found in Struthio camelus (Common ostrich).